The primary structure comprises 558 residues: Protein shisa-7 (558 aa).

The signal sequence occupies residues 1–22 (MPALLLLGTVALLASAAGPAGA). Residues 23-189 (RPSNDTSSVA…GGEGPGGSTA (167 aa)) are Extracellular-facing. A glycan (N-linked (GlcNAc...) asparagine) is linked at asparagine 26. 2 disordered regions span residues 53 to 79 (GGSA…ARAP) and 142 to 181 (TPPP…GRGG). The segment covering 57 to 77 (AGTSANATKTSPASGTGAAAR) has biased composition (low complexity). Gly residues predominate over residues 148–181 (GGAGGAGGAGGGPGPGQAGWLEGGRAGGAGGRGG). The tract at residues 154 to 175 (GGAGGGPGPGQAGWLEGGRAGG) is GRID. A helical membrane pass occupies residues 190 to 210 (YVVCGVISFALAVGVGAKVAF). At 211–558 (SKASRAPRAH…RTASKNEVTV (348 aa)) the chain is on the cytoplasmic side. The interval 236-263 (QAGPATRPDRARSSSLTPGLGGPDSMAP) is disordered. Phosphoserine is present on serine 438. The disordered stretch occupies residues 443–506 (RQSREHLLSP…HHHHALHGSP (64 aa)). Positions 453–462 (PRSPALPPDP) are enriched in pro residues. A compositionally biased stretch (low complexity) spans 466-477 (ASLAASHSNLLL). At threonine 532 the chain carries Phosphothreonine. Positions 555–558 (EVTV) match the PDZ-binding motif.

It belongs to the shisa family. Interacts with GABA(A)R (GABA type A receptor) subunits GABRA1, GABRA2 and GABRG2; the interaction is direct. Does not interact with GABRB2 and GABRB3 subunits. Interacts with AMPAR subunits GRIA1, GRIA2 and GRIA3 and AMPAR auxiliary proteins SHISA6 and SHISA7 in heterologous cells. Interacts (via PDZ-binding motif) with DLG4/PSD-95 (via PDZ domain)in heterologous cells; the interaction is direct. In terms of processing, N-glycosylated. As to expression, mainly expressed in neurons. Highly expressed in brain structures including cortex, striatum, olfactory bulb, amygdala hippocampus CA1-3 and dentate gyrus (at protein level).

Its subcellular location is the postsynaptic density membrane. Functionally, transmembrane protein that regulates gamma-aminobutyric acid type A receptor (GABA(A)R) trafficking, channel deactivation kinetics and pharmacology, necessary for fast inhibitory transmission in the brain. Enhances the action of benzodiazepine, a primary GABA(A)Rs target drug, in the brain. May affect channel kinetics of AMPA-type glutamate receptors (AMPAR), the brain's main excitatory neurotransmitter, necessary for synaptic hippocampal plasticity, and memory recall. May regulate the induction and maintenance of long-term potentiation at Schaffer collaterals/CA3-CA1 excitatory synapses. This Mus musculus (Mouse) protein is Protein shisa-7.